A 164-amino-acid polypeptide reads, in one-letter code: Crossover junction endodeoxyribonuclease RuvC (164 aa).

Active-site residues include Asp-7, Glu-67, and Asp-140. Asp-7, Glu-67, and Asp-140 together coordinate Mg(2+).

Belongs to the RuvC family. In terms of assembly, homodimer which binds Holliday junction (HJ) DNA. The HJ becomes 2-fold symmetrical on binding to RuvC with unstacked arms; it has a different conformation from HJ DNA in complex with RuvA. In the full resolvosome a probable DNA-RuvA(4)-RuvB(12)-RuvC(2) complex forms which resolves the HJ. Mg(2+) is required as a cofactor.

It is found in the cytoplasm. It catalyses the reaction Endonucleolytic cleavage at a junction such as a reciprocal single-stranded crossover between two homologous DNA duplexes (Holliday junction).. Its function is as follows. The RuvA-RuvB-RuvC complex processes Holliday junction (HJ) DNA during genetic recombination and DNA repair. Endonuclease that resolves HJ intermediates. Cleaves cruciform DNA by making single-stranded nicks across the HJ at symmetrical positions within the homologous arms, yielding a 5'-phosphate and a 3'-hydroxyl group; requires a central core of homology in the junction. The consensus cleavage sequence is 5'-(A/T)TT(C/G)-3'. Cleavage occurs on the 3'-side of the TT dinucleotide at the point of strand exchange. HJ branch migration catalyzed by RuvA-RuvB allows RuvC to scan DNA until it finds its consensus sequence, where it cleaves and resolves the cruciform DNA. In Alkaliphilus metalliredigens (strain QYMF), this protein is Crossover junction endodeoxyribonuclease RuvC.